Reading from the N-terminus, the 300-residue chain is MNNVLIITGPTASGKSKISIKIAQDNNGVIINCDSKQIYKEIPIITDQPKLNETFIPHKLYGYVSAVKQYSVAEWVNDLKREIYQTFTENKLPIITGGSGMYISSIIYGLSQIPAIEENIRYQTKQLFNTLGNKEFYSLLIEKDPIAKRLHYNNSYQLLRAYEVIEQTGTSIFRLQEELKRKPLFDNFTLCILVPQRQEVYKKINDRFISMINSSVIEEVKNLISLNIPNHFPAMKAHGIPEIIQYLTNKISIEKAIEIAQRNTRHYAKRQYTWFKNQFPNALFYESQDQLLKFISKKFK.

9-16 (GPTASGKS) provides a ligand contact to ATP. 11-16 (TASGKS) contributes to the substrate binding site. The interval 34 to 37 (DSKQ) is interaction with substrate tRNA.

This sequence belongs to the IPP transferase family. As to quaternary structure, monomer. It depends on Mg(2+) as a cofactor.

The enzyme catalyses adenosine(37) in tRNA + dimethylallyl diphosphate = N(6)-dimethylallyladenosine(37) in tRNA + diphosphate. Functionally, catalyzes the transfer of a dimethylallyl group onto the adenine at position 37 in tRNAs that read codons beginning with uridine, leading to the formation of N6-(dimethylallyl)adenosine (i(6)A). The protein is tRNA dimethylallyltransferase of Ehrlichia ruminantium (strain Welgevonden).